A 299-amino-acid chain; its full sequence is Homoserine kinase (299 aa).

85-95 (PMSRGLGSSAT) lines the ATP pocket.

This sequence belongs to the GHMP kinase family. Homoserine kinase subfamily.

Its subcellular location is the cytoplasm. It carries out the reaction L-homoserine + ATP = O-phospho-L-homoserine + ADP + H(+). The protein operates within amino-acid biosynthesis; L-threonine biosynthesis; L-threonine from L-aspartate: step 4/5. Catalyzes the ATP-dependent phosphorylation of L-homoserine to L-homoserine phosphate. This Clostridium novyi (strain NT) protein is Homoserine kinase.